The sequence spans 878 residues: Phosphoenolpyruvate carboxylase (878 aa).

Active-site residues include His-137 and Lys-545.

The protein belongs to the PEPCase type 1 family. Mg(2+) is required as a cofactor.

It carries out the reaction oxaloacetate + phosphate = phosphoenolpyruvate + hydrogencarbonate. Its function is as follows. Forms oxaloacetate, a four-carbon dicarboxylic acid source for the tricarboxylic acid cycle. The polypeptide is Phosphoenolpyruvate carboxylase (Yersinia pseudotuberculosis serotype O:1b (strain IP 31758)).